A 140-amino-acid polypeptide reads, in one-letter code: FAD synthase (140 aa).

Residues threonine 9–phenylalanine 10, histidine 14–histidine 17, and aspartate 92 each bind ATP.

Belongs to the archaeal FAD synthase family. In terms of assembly, homodimer. The cofactor is a divalent metal cation.

It carries out the reaction FMN + ATP + H(+) = FAD + diphosphate. It participates in cofactor biosynthesis; FAD biosynthesis; FAD from FMN: step 1/1. Catalyzes the transfer of the AMP portion of ATP to flavin mononucleotide (FMN) to produce flavin adenine dinucleotide (FAD) coenzyme. The sequence is that of FAD synthase from Natronomonas pharaonis (strain ATCC 35678 / DSM 2160 / CIP 103997 / JCM 8858 / NBRC 14720 / NCIMB 2260 / Gabara) (Halobacterium pharaonis).